The sequence spans 861 residues: Probable linoleate 9S-lipoxygenase 8 (861 aa).

Residues 33–160 (FTDLASSLTG…NYKSDRIFFA (128 aa)) form the PLAT domain. Residues 163-861 (PYLPSETPEL…GKGIPNSVSI (699 aa)) enclose the Lipoxygenase domain. Positions 220 to 245 (TLGGSAEYPYPRRGRTGRPPTRTDPK) are disordered. The Fe cation site is built by His-522, His-527, His-713, Asn-717, and Ile-861.

Belongs to the lipoxygenase family. Monomer. Fe cation is required as a cofactor.

It is found in the cytoplasm. The catalysed reaction is (9Z,12Z)-octadecadienoate + O2 = (9S)-hydroperoxy-(10E,12Z)-octadecadienoate. It functions in the pathway lipid metabolism; oxylipin biosynthesis. Plant lipoxygenases may be involved in a number of diverse aspects of plant physiology including growth and development, pest resistance, and senescence or responses to wounding. Catalyzes the hydroperoxidation of lipids containing a cis,cis-1,4-pentadiene structure. This chain is Probable linoleate 9S-lipoxygenase 8 (LOX1.8), found in Solanum tuberosum (Potato).